A 338-amino-acid chain; its full sequence is tRNA-specific 2-thiouridylase MnmA (338 aa).

ATP contacts are provided by residues 6 to 13 (AMSGGVDS) and Met32. Cys92 (nucleophile) is an active-site residue. Cys92 and Cys186 are joined by a disulfide. Gly116 contributes to the ATP binding site. Residues 134–136 (KDQ) form an interaction with tRNA region. Cys186 (cysteine persulfide intermediate) is an active-site residue. The interaction with tRNA stretch occupies residues 288–289 (RY).

Belongs to the MnmA/TRMU family.

The protein resides in the cytoplasm. It carries out the reaction S-sulfanyl-L-cysteinyl-[protein] + uridine(34) in tRNA + AH2 + ATP = 2-thiouridine(34) in tRNA + L-cysteinyl-[protein] + A + AMP + diphosphate + H(+). In terms of biological role, catalyzes the 2-thiolation of uridine at the wobble position (U34) of tRNA, leading to the formation of s(2)U34. In Campylobacter jejuni subsp. jejuni serotype O:6 (strain 81116 / NCTC 11828), this protein is tRNA-specific 2-thiouridylase MnmA.